The chain runs to 207 residues: ATP synthase subunit 5, mitochondrial (207 aa).

Belongs to the ATPase delta chain family. In terms of assembly, F-type ATPases have 2 components, CF(1) - the catalytic core - and CF(0) - the membrane proton channel. CF(1) has five subunits: alpha(3), beta(3), gamma(1), delta(1), epsilon(1). CF(0) has three main subunits: a, b and c.

The protein localises to the mitochondrion. It localises to the mitochondrion inner membrane. Mitochondrial membrane ATP synthase (F(1)F(0) ATP synthase or Complex V) produces ATP from ADP in the presence of a proton gradient across the membrane which is generated by electron transport complexes of the respiratory chain. F-type ATPases consist of two structural domains, F(1) - containing the extramembraneous catalytic core and F(0) - containing the membrane proton channel, linked together by a central stalk and a peripheral stalk. During catalysis, ATP synthesis in the catalytic domain of F(1) is coupled via a rotary mechanism of the central stalk subunits to proton translocation. Part of the complex F(0) domain and the peripheric stalk, which acts as a stator to hold the catalytic alpha(3)beta(3) subcomplex and subunit a/ATP6 static relative to the rotary elements. The sequence is that of ATP synthase subunit 5, mitochondrial (ATP5) from Candida glabrata (strain ATCC 2001 / BCRC 20586 / JCM 3761 / NBRC 0622 / NRRL Y-65 / CBS 138) (Yeast).